A 1298-amino-acid polypeptide reads, in one-letter code: Histone-lysine N-methyltransferase EHMT1 (1298 aa).

Disordered regions lie at residues 1–111 (MAAA…HVTA) and 144–192 (ASSL…RKLP). An N-acetylalanine modification is found at alanine 2. Residue lysine 22 forms a Glycyl lysine isopeptide (Lys-Gly) (interchain with G-Cter in SUMO1); alternate linkage. Residue lysine 22 forms a Glycyl lysine isopeptide (Lys-Gly) (interchain with G-Cter in SUMO2); alternate linkage. Basic and acidic residues predominate over residues 38–50 (SAEKQAGEAHMAA). Composition is skewed to polar residues over residues 54–67 (TNGS…SSHA) and 76–89 (SARV…NTLT). The segment covering 96–105 (VSERDSEAAK) has biased composition (basic and acidic residues). Residues lysine 190, lysine 199, lysine 231, lysine 234, lysine 317, and lysine 327 each participate in a glycyl lysine isopeptide (Lys-Gly) (interchain with G-Cter in SUMO2) cross-link. The interval 211–234 (VVGLHAASKDPREVREARDHKEPK) is disordered. Positions 217-234 (ASKDPREVREARDHKEPK) are enriched in basic and acidic residues. The segment at 339 to 479 (VNGESLEMDS…QTAPGDSTGY (141 aa)) is disordered. Positions 344–360 (LEMDSDEDDSEELEEDD) are enriched in acidic residues. Over residues 373–393 (EDSRTSKESMSEADRAQKMDG) the composition is skewed to basic and acidic residues. The span at 394 to 416 (ESEEEQESVDTGEEEEGGDESDL) shows a compositional bias: acidic residues. A Glycyl lysine isopeptide (Lys-Gly) (interchain with G-Cter in SUMO2) cross-link involves residue lysine 432. A Phosphoserine modification is found at serine 435. Positions 440-452 (PARKRRRRSRKKP) are enriched in basic residues. Positions 460–474 (SYKSSAGSAEQTAPG) are enriched in polar residues. Serine 483 carries the post-translational modification Phosphoserine. Residues lysine 492, lysine 559, lysine 644, lysine 659, lysine 684, and lysine 731 each participate in a glycyl lysine isopeptide (Lys-Gly) (interchain with G-Cter in SUMO2) cross-link. Residues 644 to 717 (KADTTSTVTP…TPGLSQGPGK (74 aa)) form a disordered region. ANK repeat units follow at residues 737 to 766 (FHPK…DPNF), 772 to 801 (NKRS…NIDT), 805 to 834 (DQRT…LVDP), 838 to 868 (EGST…DVNC), 872 to 901 (GGWT…DINI), 905 to 934 (EENI…DLHA), 938 to 967 (HGDS…DVTL), and 971 to 1004 (EGET…DRPS). A histone H3K9me binding region spans residues 905–907 (EEN). Phosphoserine occurs at positions 1004 and 1048. Residues 1060–1123 (QYCVCIDDCS…NCRNRVVQNG (64 aa)) enclose the Pre-SET domain. Zn(2+) contacts are provided by cysteine 1062, cysteine 1064, cysteine 1068, cysteine 1073, cysteine 1075, cysteine 1105, cysteine 1109, cysteine 1111, and cysteine 1115. The 118-residue stretch at 1126-1243 (ARLQLYRTRD…AGEQLGFDYG (118 aa)) folds into the SET domain. Residues 1136-1138 (MGW), tyrosine 1173, and 1200-1201 (NH) each bind S-adenosyl-L-methionine. The interval 1162–1181 (DSEADVREEDSYLFDLDNKD) is interaction with histone H3. Cysteine 1203 provides a ligand contact to Zn(2+). Positions 1242-1245 (YGER) are interaction with histone H3. Cysteine 1256 contributes to the Zn(2+) binding site. S-adenosyl-L-methionine is bound at residue arginine 1257. Zn(2+) contacts are provided by cysteine 1258 and cysteine 1263. The segment at 1274–1298 (QASAAQEAQEDGLPDTSSAAAADPL) is disordered.

It belongs to the class V-like SAM-binding methyltransferase superfamily. As to quaternary structure, heterodimer; heterodimerizes with EHMT2. Interacts with WIZ and EHMT2. Part of the E2F6.com-1 complex in G0 phase composed of E2F6, MGA, MAX, TFDP1, CBX3, BAT8, EHMT1, RING1, RNF2, MBLR, L3MBTL2 and YAF2. Interacts (via ANK repeats) with RELA (when monomethylated at 'Lys-310'). Interacts with MPHOSPH8. Interacts with CDYL. Interacts with REST only in the presence of CDYL. Part of a complex containing at least CDYL, REST, WIZ, SETB1, EHMT1 and EHMT2. Interacts with BAZ2B. In terms of tissue distribution, widely expressed.

It localises to the nucleus. The protein localises to the chromosome. It catalyses the reaction N(6)-methyl-L-lysyl(9)-[histone H3] + S-adenosyl-L-methionine = N(6),N(6)-dimethyl-L-lysyl(9)-[histone H3] + S-adenosyl-L-homocysteine + H(+). The enzyme catalyses L-lysyl(9)-[histone H3] + S-adenosyl-L-methionine = N(6)-methyl-L-lysyl(9)-[histone H3] + S-adenosyl-L-homocysteine + H(+). Its activity is regulated as follows. Methyltransferase activity is inhibited by BIX-01294. Efficiently inhibited by compound E72, a BIX-01294 derivative in which the diazepane ring and the benzyl are replaced with a 3-dimethylaminopropyl and a 5-aminopentyl group at sites B and C, respectively. In terms of biological role, histone methyltransferase that specifically mono- and dimethylates 'Lys-9' of histone H3 (H3K9me1 and H3K9me2, respectively) in euchromatin. H3K9me represents a specific tag for epigenetic transcriptional repression by recruiting HP1 proteins to methylated histones. Also weakly methylates 'Lys-27' of histone H3 (H3K27me). Also required for DNA methylation, the histone methyltransferase activity is not required for DNA methylation, suggesting that these 2 activities function independently. Probably targeted to histone H3 by different DNA-binding proteins like E2F6, MGA, MAX and/or DP1. During G0 phase, it probably contributes to silencing of MYC- and E2F-responsive genes, suggesting a role in G0/G1 transition in cell cycle. In addition to the histone methyltransferase activity, also methylates non-histone proteins: mediates dimethylation of 'Lys-373' of p53/TP53. Represses the expression of mitochondrial function-related genes, perhaps by occupying their promoter regions, working in concert with probable chromatin reader BAZ2B. This Homo sapiens (Human) protein is Histone-lysine N-methyltransferase EHMT1 (EHMT1).